We begin with the raw amino-acid sequence, 560 residues long: (E)-beta-farnesene synthase (560 aa).

D312, D316, D457, and E465 together coordinate Mg(2+). The short motif at D312–D316 is the DDXXD motif element.

This sequence belongs to the terpene synthase family. Mg(2+) is required as a cofactor. The cofactor is Co(2+). Mn(2+) serves as cofactor.

It is found in the cytoplasm. It catalyses the reaction (2E,6E)-farnesyl diphosphate = (E)-beta-farnesene + diphosphate. The protein operates within secondary metabolite biosynthesis; terpenoid biosynthesis. Its function is as follows. Sesquiterpene cyclase catalyzing the production of beta-farnesene from farnesyl diphosphate. The chain is (E)-beta-farnesene synthase from Citrus junos (Yuzu).